A 447-amino-acid chain; its full sequence is Gamma-glutamyl phosphate reductase (447 aa).

It belongs to the gamma-glutamyl phosphate reductase family.

Its subcellular location is the cytoplasm. The enzyme catalyses L-glutamate 5-semialdehyde + phosphate + NADP(+) = L-glutamyl 5-phosphate + NADPH + H(+). It functions in the pathway amino-acid biosynthesis; L-proline biosynthesis; L-glutamate 5-semialdehyde from L-glutamate: step 2/2. Functionally, catalyzes the NADPH-dependent reduction of L-glutamate 5-phosphate into L-glutamate 5-semialdehyde and phosphate. The product spontaneously undergoes cyclization to form 1-pyrroline-5-carboxylate. The protein is Gamma-glutamyl phosphate reductase of Methanosarcina mazei (strain ATCC BAA-159 / DSM 3647 / Goe1 / Go1 / JCM 11833 / OCM 88) (Methanosarcina frisia).